The following is a 75-amino-acid chain: Sec-independent protein translocase protein TatA (75 aa).

The chain crosses the membrane as a helical span at residues 1 to 21 (MGISIWQLLIVLGIVILLFGT). A disordered region spans residues 41–75 (SMSDEEEKNAEQQPLEKQNAEQQAQAEDKPKEKQG). The span at 56–65 (EKQNAEQQAQ) shows a compositional bias: low complexity. The segment covering 66–75 (AEDKPKEKQG) has biased composition (basic and acidic residues).

This sequence belongs to the TatA/E family. In terms of assembly, the Tat system comprises two distinct complexes: a TatABC complex, containing multiple copies of TatA, TatB and TatC subunits, and a separate TatA complex, containing only TatA subunits. Substrates initially bind to the TatABC complex, which probably triggers association of the separate TatA complex to form the active translocon.

Its subcellular location is the cell inner membrane. Its function is as follows. Part of the twin-arginine translocation (Tat) system that transports large folded proteins containing a characteristic twin-arginine motif in their signal peptide across membranes. TatA could form the protein-conducting channel of the Tat system. This chain is Sec-independent protein translocase protein TatA, found in Marinobacter nauticus (strain ATCC 700491 / DSM 11845 / VT8) (Marinobacter aquaeolei).